The chain runs to 887 residues: Collagen alpha-2(I) chain (887 aa).

The segment covering 1 to 42 (GPMGIMGPRGPPGASGAPGPQGFQGPPGEPGEPGQTGPAGAR) has biased composition (low complexity). Residues 1-887 (GPMGIMGPRG…PGPPGPPGPS (887 aa)) are disordered. Residues 51-65 (AGEDGHPGKPGRSGE) show a composition bias toward basic and acidic residues. Low complexity-rich tracts occupy residues 126-155 (VGAP…SAGP), 170-194 (PVGS…VSGP), 221-236 (PGPV…RGIV), 278-290 (IRGS…IPGA), 368-388 (AGIA…AQGP), 444-455 (PGESGAAGPTGP), and 473-503 (EPGV…IPGP). The segment covering 504–517 (KGEKGEPGIRRDGA) has biased composition (basic and acidic residues). Low complexity-rich tracts occupy residues 518-533 (RGAP…AGAN), 560-580 (VGPA…QPGA), 595-605 (ATGFPGAAGRT), 658-673 (PGPQ…IGIP), 690-720 (EPGP…APGE), and 766-782 (EPGP…VGPR). Residues 791-802 (RGDKGEPGDKGP) are compositionally biased toward basic and acidic residues. The segment covering 872 to 887 (AGPPGPPGPPGPPGPS) has biased composition (pro residues).

This sequence belongs to the fibrillar collagen family. In terms of assembly, trimers of one alpha 2(I) and two alpha 1(I) chains. Interacts (via C-terminus) with TMEM131 (via PapD-L domain); the interaction is direct and is involved in assembly and TRAPPIII ER-to-Golgi transport complex-dependent secretion of collagen. Post-translationally, prolines at the third position of the tripeptide repeating unit (G-X-Y) are hydroxylated in some or all of the chains. In terms of tissue distribution, forms the fibrils of tendon, ligaments and bones. In bones, the fibrils are mineralized with calcium hydroxyapatite.

The protein localises to the secreted. Its subcellular location is the extracellular space. It localises to the extracellular matrix. Type I collagen is a member of group I collagen (fibrillar forming collagen). The polypeptide is Collagen alpha-2(I) chain (Hippopotamus amphibius (Hippopotamus)).